The sequence spans 280 residues: Shikimate kinase (280 aa).

74 to 84 is a binding site for ATP; that stretch reads PGGSGLGSSSA.

Belongs to the GHMP kinase family. Archaeal shikimate kinase subfamily.

Its subcellular location is the cytoplasm. It catalyses the reaction shikimate + ATP = 3-phosphoshikimate + ADP + H(+). It participates in metabolic intermediate biosynthesis; chorismate biosynthesis; chorismate from D-erythrose 4-phosphate and phosphoenolpyruvate: step 5/7. The sequence is that of Shikimate kinase (aroK) from Archaeoglobus fulgidus (strain ATCC 49558 / DSM 4304 / JCM 9628 / NBRC 100126 / VC-16).